Reading from the N-terminus, the 102-residue chain is Signal recognition particle 19 kDa protein (102 aa).

The protein belongs to the SRP19 family. As to quaternary structure, part of the signal recognition particle protein translocation system, which is composed of SRP and FtsY. Archaeal SRP consists of a 7S RNA molecule of 300 nucleotides and two protein subunits: SRP54 and SRP19.

It localises to the cytoplasm. In terms of biological role, involved in targeting and insertion of nascent membrane proteins into the cytoplasmic membrane. Binds directly to 7S RNA and mediates binding of the 54 kDa subunit of the SRP. The chain is Signal recognition particle 19 kDa protein from Saccharolobus solfataricus (strain ATCC 35092 / DSM 1617 / JCM 11322 / P2) (Sulfolobus solfataricus).